We begin with the raw amino-acid sequence, 207 residues long: Crossover junction endodeoxyribonuclease RuvC (207 aa).

Residues Asp11, Glu71, and Asp143 contribute to the active site. Positions 11, 71, and 143 each coordinate Mg(2+).

The protein belongs to the RuvC family. Homodimer which binds Holliday junction (HJ) DNA. The HJ becomes 2-fold symmetrical on binding to RuvC with unstacked arms; it has a different conformation from HJ DNA in complex with RuvA. In the full resolvosome a probable DNA-RuvA(4)-RuvB(12)-RuvC(2) complex forms which resolves the HJ. Requires Mg(2+) as cofactor.

Its subcellular location is the cytoplasm. It catalyses the reaction Endonucleolytic cleavage at a junction such as a reciprocal single-stranded crossover between two homologous DNA duplexes (Holliday junction).. In terms of biological role, the RuvA-RuvB-RuvC complex processes Holliday junction (HJ) DNA during genetic recombination and DNA repair. Endonuclease that resolves HJ intermediates. Cleaves cruciform DNA by making single-stranded nicks across the HJ at symmetrical positions within the homologous arms, yielding a 5'-phosphate and a 3'-hydroxyl group; requires a central core of homology in the junction. The consensus cleavage sequence is 5'-(A/T)TT(C/G)-3'. Cleavage occurs on the 3'-side of the TT dinucleotide at the point of strand exchange. HJ branch migration catalyzed by RuvA-RuvB allows RuvC to scan DNA until it finds its consensus sequence, where it cleaves and resolves the cruciform DNA. The sequence is that of Crossover junction endodeoxyribonuclease RuvC from Methylobacterium radiotolerans (strain ATCC 27329 / DSM 1819 / JCM 2831 / NBRC 15690 / NCIMB 10815 / 0-1).